Reading from the N-terminus, the 821-residue chain is Tip elongation aberrant protein Tea4 (821 aa).

2 stretches are compositionally biased toward polar residues: residues 1-11 and 21-31; these read MLHMNSASSAD and DPTQQNDSTII. The tract at residues 1–36 is disordered; that stretch reads MLHMNSASSADSMEIMESHFDPTQQNDSTIIESRYS. Y35 bears the Phosphotyrosine mark. S36 carries the phosphoserine modification. A Phosphotyrosine modification is found at Y40. The segment at 51–79 is disordered; that stretch reads ISGENSEPQTVASQEISDSQEEDTTLTSS. The span at 53–67 shows a compositional bias: polar residues; that stretch reads GENSEPQTVASQEIS. Positions 130–191 constitute an SH3 domain; sequence IDCNFVHAIR…PAEYIETPSE (62 aa). Disordered regions lie at residues 267 to 292, 333 to 352, 473 to 500, 529 to 570, and 664 to 697; these read LEIE…DHVT, SSTT…FSSA, DSFD…MPNN, SPRL…SSLL, and DASS…SFSS. Low complexity predominate over residues 268–282; it reads EIEFSDSSDSSLSAE. Basic and acidic residues predominate over residues 283–292; sequence YRSESEDHVT. Composition is skewed to polar residues over residues 333 to 350 and 473 to 484; these read SSTT…SKFS and DSFDTSNVTQDA. The tract at residues 527-821 is interaction with tea1; the sequence is LLSPRLYSSS…EMASLLNTNR (295 aa). Low complexity predominate over residues 529–541; the sequence is SPRLYSSSTPSSP. Basic and acidic residues predominate over residues 554–563; the sequence is ENRKQADKVE. Positions 599-821 are interaction with win1; that stretch reads KAFSQSSIDL…EMASLLNTNR (223 aa). Residues 665–674 show a composition bias toward low complexity; it reads ASSAIPSSSI. The span at 675 to 687 shows a compositional bias: basic and acidic residues; sequence SHDEDLLPRKNTE.

As to quaternary structure, an essential component of the tea1 cell-end complex. Interacts with win1, tea1 and for3. Interacts with tip1 in the presence of tea1.

It is found in the cytoplasm. It localises to the cytoskeleton. Cell polarity factor essential for the bipolar localization and function of structures containing the cell-end marker tea1 during the normal cell cycle. Regulates cell polarity in complex with tea1 and together with the stress signaling MAPK cascade, contributes to cell polarity maintenance under stress conditions. Required for the localization of for3 at the cell tip specifically during initiation of bipolar growth. During the new end take off (NETO), formation of a protein complex that includes tea1, tea4 and for3 is necessary and sufficient for the establishment of cell polarity and localized actin assembly at new cell ends. In Schizosaccharomyces pombe (strain 972 / ATCC 24843) (Fission yeast), this protein is Tip elongation aberrant protein Tea4.